The following is a 209-amino-acid chain: Hydrogenase expression/formation protein HupM (209 aa).

Residues Glu21, Asp67, and His98 each contribute to the Ni(2+) site.

The protein belongs to the peptidase A31 family.

Not known. Could be involved in the processing of hydrogenase. The protein is Hydrogenase expression/formation protein HupM (hupM) of Azotobacter chroococcum mcd 1.